The sequence spans 387 residues: Alkanesulfonate monooxygenase (387 aa).

It belongs to the SsuD family.

The catalysed reaction is an alkanesulfonate + FMNH2 + O2 = an aldehyde + FMN + sulfite + H2O + 2 H(+). Catalyzes the desulfonation of aliphatic sulfonates. This is Alkanesulfonate monooxygenase from Cupriavidus pinatubonensis (strain JMP 134 / LMG 1197) (Cupriavidus necator (strain JMP 134)).